Reading from the N-terminus, the 407-residue chain is Dephospho-CoA kinase (407 aa).

Residues 3–204 (RIGLTGGIGA…QPFAHNLAQR (202 aa)) enclose the DPCK domain. 11 to 16 (GAGKSL) lines the ATP pocket. Residues 196–407 (PFAHNLAQRQ…EWADAVHWRP (212 aa)) are UPF0157.

In the N-terminal section; belongs to the CoaE family. The protein in the C-terminal section; belongs to the UPF0157 (GrpB) family.

The protein localises to the cytoplasm. It carries out the reaction 3'-dephospho-CoA + ATP = ADP + CoA + H(+). The protein operates within cofactor biosynthesis; coenzyme A biosynthesis; CoA from (R)-pantothenate: step 5/5. Catalyzes the phosphorylation of the 3'-hydroxyl group of dephosphocoenzyme A to form coenzyme A. The chain is Dephospho-CoA kinase from Mycobacterium bovis (strain ATCC BAA-935 / AF2122/97).